A 364-amino-acid polypeptide reads, in one-letter code: Guanine nucleotide-binding protein alpha-6 subunit (364 aa).

Positions 1 to 29 (MGAGATGLRGARLSPEERANSSKSRAIDR) are disordered. Glycine 2 carries N-myristoyl glycine lipidation. Residues 14 to 29 (SPEERANSSKSRAIDR) show a composition bias toward basic and acidic residues. Residues 40–363 (NRFKILLLGT…NENLRSAGLH (324 aa)) enclose the G-alpha domain. The tract at residues 43-56 (KILLLGTAESGKST) is G1 motif. GTP-binding positions include 48–55 (GTAESGKS), 186–192 (VHCRIST), 211–215 (DVGGQ), 280–283 (NKYD), and alanine 335. Mg(2+) contacts are provided by serine 55 and threonine 192. Residues 184 to 192 (DIVHCRIST) form a G2 motif region. The G3 motif stretch occupies residues 207–216 (FKMVDVGGQR). Residues 276-283 (VLFLNKYD) are G4 motif. Residues 333–338 (TTATDT) are G5 motif.

The protein belongs to the G-alpha family. G proteins are composed of 3 units; alpha, beta and gamma. The alpha chain contains the guanine nucleotide binding site.

Functionally, guanine nucleotide-binding proteins (G proteins) are involved as modulators or transducers in various transmembrane signaling systems. This chain is Guanine nucleotide-binding protein alpha-6 subunit (gpa-6), found in Caenorhabditis elegans.